We begin with the raw amino-acid sequence, 232 residues long: Phosphatidylserine decarboxylase proenzyme (232 aa).

The active-site Schiff-base intermediate with substrate; via pyruvic acid is serine 190. Position 190 is a pyruvic acid (Ser); by autocatalysis (serine 190).

The protein belongs to the phosphatidylserine decarboxylase family. PSD-A subfamily. As to quaternary structure, heterodimer of a large membrane-associated beta subunit and a small pyruvoyl-containing alpha subunit. Pyruvate serves as cofactor. Post-translationally, is synthesized initially as an inactive proenzyme. Formation of the active enzyme involves a self-maturation process in which the active site pyruvoyl group is generated from an internal serine residue via an autocatalytic post-translational modification. Two non-identical subunits are generated from the proenzyme in this reaction, and the pyruvate is formed at the N-terminus of the alpha chain, which is derived from the carboxyl end of the proenzyme. The post-translation cleavage follows an unusual pathway, termed non-hydrolytic serinolysis, in which the side chain hydroxyl group of the serine supplies its oxygen atom to form the C-terminus of the beta chain, while the remainder of the serine residue undergoes an oxidative deamination to produce ammonia and the pyruvoyl prosthetic group on the alpha chain.

The protein localises to the cell membrane. It catalyses the reaction a 1,2-diacyl-sn-glycero-3-phospho-L-serine + H(+) = a 1,2-diacyl-sn-glycero-3-phosphoethanolamine + CO2. It functions in the pathway phospholipid metabolism; phosphatidylethanolamine biosynthesis; phosphatidylethanolamine from CDP-diacylglycerol: step 2/2. Its function is as follows. Catalyzes the formation of phosphatidylethanolamine (PtdEtn) from phosphatidylserine (PtdSer). The chain is Phosphatidylserine decarboxylase proenzyme from Beijerinckia indica subsp. indica (strain ATCC 9039 / DSM 1715 / NCIMB 8712).